A 555-amino-acid chain; its full sequence is Potassium-transporting ATPase potassium-binding subunit (555 aa).

Helical transmembrane passes span 2–22, 60–80, 130–150, 173–193, 246–266, 278–298, 374–394, 412–432, 483–503, and 525–545; these read IWVA…PTGI, QYAL…YFIF, IGIT…VMAF, VFLP…VPQT, MSNI…PFTY, ILFV…TTSE, AGFV…GLMV, LIAV…ALAL, LVMF…AASL, and GIFI…MLVL.

It belongs to the KdpA family. In terms of assembly, the system is composed of three essential subunits: KdpA, KdpB and KdpC.

The protein localises to the cell membrane. Functionally, part of the high-affinity ATP-driven potassium transport (or Kdp) system, which catalyzes the hydrolysis of ATP coupled with the electrogenic transport of potassium into the cytoplasm. This subunit binds the extracellular potassium ions and delivers the ions to the membrane domain of KdpB through an intramembrane tunnel. This chain is Potassium-transporting ATPase potassium-binding subunit, found in Bacillus cereus (strain ZK / E33L).